The primary structure comprises 294 residues: Phosphoprotein (294 aa).

Residues 12–28 (MGNEAAKAAEAFQRSLK) are binding to monomeric RNA-free nucleoprotein. The interval 52–97 (KPTISKSTKVTTPPERRNAWGEKPDTTRNQTEEARNEATLEDTSRL) is disordered. Residues 65 to 97 (PERRNAWGEKPDTTRNQTEEARNEATLEDTSRL) are compositionally biased toward basic and acidic residues. A Phosphoserine modification is found at S106. A binding to host phosphatase PP1 region spans residues 123-128 (KKKVTF). The binding to protein M2-1 stretch occupies residues 135–157 (RYTKLEMEALELLSDNEDDDAES). A phosphoserine mark is found at S148, S157, S158, S168, and S171. The segment at 169 to 194 (ALSLEARLESIDEKLSMILGLLRTLN) is oligomerization and binding to RNA-directed RNA polymerase L. Residues 234–294 (MKEEAKQKSK…PDDDLYSLTM (61 aa)) are disordered. Residues 251–279 (LTEKAKELNKIVEDESTSGESEEEEEEED) form a binding to RNA-directed RNA polymerase L region. Residues 253–263 (EKAKELNKIVE) are compositionally biased toward basic and acidic residues. Residues 264 to 294 (DESTSGESEEEEEEEDEEESNPDDDLYSLTM) show a composition bias toward acidic residues. A binding to the N-RNA complex region spans residues 281–294 (EESNPDDDLYSLTM).

This sequence belongs to the pneumoviridae phosphoprotein P family. Homotetramer. Interacts with protein M2-1; the interaction between the two tetramers is required for the anti-termination and elongation transcriptional activities of protein M2-1. Interacts with host phosphatase PP1; this interaction recruits PP1 to the inclusion bodies. Formation of a complex PP1/M2-1/P allows P to target host PP1 phosphatase to the M2-1 substrate. Interacts with the nucleoprotein N; the phosphorylated phosphoprotein P binds to N-RNA complex. Interacts with the monomeric RNA-free nucleoprotein N. Interacts with RNA-directed RNA polymerase L (via N-terminus); the association of P and L forms the polymerase complex. In terms of processing, constitutively phosphorylated by host.

It is found in the virion. Its subcellular location is the host cytoplasm. In terms of biological role, plays critical roles in regulating RNA replication and transcription through its interactions with multiple proteins. Tethers the RNA-directed RNA polymerase L to the nucleoprotein-RNA complex. Recruits the M2-1 protein, a processivity factor that is required for efficient transcription of viral RNA. Acts as a chaperone for neo-synthesized nucleoprotein by forming an N-P complex that preserves N in a monomeric and RNA-free state and prevents the association of nascent N with host cell RNAs. Recruits the host phosphatase PP1 to inclusion bodies to regulate viral transcription. In Avian metapneumovirus (isolate Canada goose/Minnesota/15a/2001) (AMPV), this protein is Phosphoprotein.